A 241-amino-acid polypeptide reads, in one-letter code: DnaA regulatory inactivator Hda (241 aa).

Belongs to the DnaA family. HdA subfamily. In terms of assembly, the active form seems to be an ADP-bound monomer. Forms the RIDA complex (regulatory inactivation of DnaA) of ATP-DnaA, ADP-Hda and the DNA-loaded beta sliding clamp (dnaN).

Functionally, mediates the interaction of DNA replication initiator protein DnaA with DNA polymerase subunit beta sliding clamp (dnaN). Stimulates hydrolysis of ATP-DnaA to ADP-DnaA, rendering DnaA inactive for reinitiation, a process called regulatory inhibition of DnaA or RIDA. The sequence is that of DnaA regulatory inactivator Hda from Salmonella arizonae (strain ATCC BAA-731 / CDC346-86 / RSK2980).